The chain runs to 529 residues: Bifunctional purine biosynthesis protein PurH (529 aa).

Residues 2-149 enclose the MGS-like domain; that stretch reads TNLVPVGRAL…KNHRFVNVVT (148 aa).

It belongs to the PurH family.

The catalysed reaction is (6R)-10-formyltetrahydrofolate + 5-amino-1-(5-phospho-beta-D-ribosyl)imidazole-4-carboxamide = 5-formamido-1-(5-phospho-D-ribosyl)imidazole-4-carboxamide + (6S)-5,6,7,8-tetrahydrofolate. It catalyses the reaction IMP + H2O = 5-formamido-1-(5-phospho-D-ribosyl)imidazole-4-carboxamide. The protein operates within purine metabolism; IMP biosynthesis via de novo pathway; 5-formamido-1-(5-phospho-D-ribosyl)imidazole-4-carboxamide from 5-amino-1-(5-phospho-D-ribosyl)imidazole-4-carboxamide (10-formyl THF route): step 1/1. It functions in the pathway purine metabolism; IMP biosynthesis via de novo pathway; IMP from 5-formamido-1-(5-phospho-D-ribosyl)imidazole-4-carboxamide: step 1/1. The protein is Bifunctional purine biosynthesis protein PurH of Cereibacter sphaeroides (strain ATCC 17029 / ATH 2.4.9) (Rhodobacter sphaeroides).